The sequence spans 286 residues: Homeobox-leucine zipper protein ATHB-20 (286 aa).

Positions 84–143 (LGEKKKRLQLEQVKALEKSFELGNKLEPERKIQLAKALGMQPRQIAIWFQNRRARWKTRQ) form a DNA-binding region, homeobox. A leucine-zipper region spans residues 144 to 179 (LERDYDSLKKQFESLKSDNASLLAYNKKLLAEVMAL).

The protein belongs to the HD-ZIP homeobox family. Class I subfamily. In terms of tissue distribution, widely expressed.

The protein localises to the nucleus. In terms of biological role, probable transcription factor. The polypeptide is Homeobox-leucine zipper protein ATHB-20 (ATHB-20) (Arabidopsis thaliana (Mouse-ear cress)).